The following is a 679-amino-acid chain: Stress-70 protein, mitochondrial (679 aa).

A mitochondrion-targeting transit peptide spans 1 to 46 (MISASRAAAARLVGTTASRSPAAARHQDGWNGLSHEAFRFVSRRDY). The interval 1–432 (MISASRAAAA…IQGGVLAGDV (432 aa)) is interaction with NFS1. The ADP site is built by threonine 63 and asparagine 64. Residues 63-431 (TNSCVAVMEG…AIQGGVLAGD (369 aa)) are nucleotide-binding domain (NBD). Lysine 76 carries the N6-acetyllysine modification. Threonine 87 carries the phosphothreonine modification. An N6-acetyllysine; alternate mark is found at lysine 135 and lysine 138. Residues lysine 135 and lysine 138 each carry the N6-succinyllysine; alternate modification. Lysine 143 carries the post-translational modification N6-acetyllysine. At lysine 206 the chain carries N6-acetyllysine; alternate. Lysine 206 bears the N6-succinyllysine; alternate mark. Lysine 206 carries the N6-malonyllysine; alternate modification. Lysine 234 and lysine 288 each carry N6-acetyllysine. Position 300 is an N6-acetyllysine; alternate (lysine 300). Lysine 300 carries the N6-succinyllysine; alternate modification. The ADP site is built by glutamate 313, lysine 316, and serine 320. Position 360 is an N6-acetyllysine; alternate (lysine 360). Lysine 360 is modified (N6-succinyllysine; alternate). N6-succinyllysine is present on lysine 368. Positions 388 and 391 each coordinate ADP. Lysine 394 bears the N6-succinyllysine mark. Serine 408 bears the Phosphoserine mark. Residues 432 to 441 (VTDVLLLDVT) form an interdomain linker region. The tract at residues 432 to 679 (VTDVLLLDVT…QKEDQKEEKQ (248 aa)) is interaction with FXN and ISCU. The interval 442–679 (PLSLGIETLG…QKEDQKEEKQ (238 aa)) is substrate-binding domain (SBD). Arginine 513 bears the Omega-N-methylarginine mark. N6-acetyllysine; alternate is present on residues lysine 567 and lysine 600. Residues lysine 567 and lysine 600 each carry the N6-succinyllysine; alternate modification. Position 610 is an N6-succinyllysine (lysine 610). Lysine 612 is modified (N6-acetyllysine). N6-acetyllysine; alternate is present on lysine 646. An N6-succinyllysine; alternate modification is found at lysine 646. Positions 655–679 (MASEREGSGSSSTGEQKEDQKEEKQ) are disordered. The span at 669-679 (EQKEDQKEEKQ) shows a compositional bias: basic and acidic residues.

It belongs to the heat shock protein 70 family. In terms of assembly, interacts strongly with the intermediate form of FXN and weakly with its mature form. Interacts with HSCB. Associates with the mitochondrial contact site and cristae organizing system (MICOS) complex, composed of at least MICOS10/MIC10, CHCHD3/MIC19, CHCHD6/MIC25, APOOL/MIC27, IMMT/MIC60, APOO/MIC23/MIC26 and QIL1/MIC13. This complex was also known under the names MINOS or MitOS complex. The MICOS complex associates with mitochondrial outer membrane proteins SAMM50, MTX1, MTX2 and DNAJC11, mitochondrial inner membrane protein TMEM11 and with HSPA9. Interacts with DNLZ, the interaction is required to prevent self-aggregation. Interacts with TESPA1. Interacts with PDPN. Interacts with NFU1, NFS1 and ISCU. Interacts with TP53; the interaction promotes TP53 degradation. Interacts (via SBD domain) with UBXN2A; the interaction with UBXN2A inhibits HSPA9 interaction with and degradation of TP53, thereby promotes TP53 translocation to the nucleus. Interacts with ITPR1 AND VDAC1; this interaction couples ITPR1 to VDAC1. Component of the TIM23 mitochondrial inner membrane pre-sequence translocase complex.

The protein resides in the mitochondrion. It localises to the nucleus. The protein localises to the nucleolus. It is found in the cytoplasm. Its subcellular location is the mitochondrion matrix. The catalysed reaction is ATP + H2O = ADP + phosphate + H(+). The chaperone activity is regulated by ATP-induced allosteric coupling of the nucleotide-binding (NBD) and substrate-binding (SBD) domains. ATP binding in the nucleotide-binding pocket (NBP) leads to a conformational change in the NBD, which is transferred through the interdomain linker (IDL) to the substrate-binding domain (SBD). This elicits a reduced substrate affinity and a faster substrate exchange rate. Upon hydrolysis of ATP to ADP, the protein undergoes a conformational change that increases its affinity for substrate proteins. It cycles through repeated phases of ATP hydrolysis and nucleotide exchange, facilitating repeated cycles of substrate binding and release. Functions in collaboration with co-chaperones. Functions with the co-chaperone, DNLZ, to maintain solubility and regulate ATP hydrolysis. Nucleotide exchange factors, GRPEL1 and GRPEL2, accelerate nucleotide exchange. In terms of biological role, mitochondrial chaperone that plays a key role in mitochondrial protein import, folding, and assembly. Plays an essential role in the protein quality control system, the correct folding of proteins, the re-folding of misfolded proteins, and the targeting of proteins for subsequent degradation. These processes are achieved through cycles of ATP binding, ATP hydrolysis, and ADP release, mediated by co-chaperones. In mitochondria, it associates with the TIM (translocase of the inner membrane) protein complex to assist in the import and folding of mitochondrial proteins. Plays an important role in mitochondrial iron-sulfur cluster (ISC) biogenesis, interacts with and stabilizes ISC cluster assembly proteins FXN, NFU1, NFS1 and ISCU. Regulates erythropoiesis via stabilization of ISC assembly. Regulates mitochondrial calcium-dependent apoptosis by coupling two calcium channels, ITPR1 and VDAC1, at the mitochondria-associated endoplasmic reticulum (ER) membrane to facilitate calcium transport from the ER lumen to the mitochondria intermembrane space, providing calcium for the downstream calcium channel MCU, which releases it into the mitochondrial matrix. Although primarily located in the mitochondria, it is also found in other cellular compartments. In the cytosol, it associates with proteins involved in signaling, apoptosis, or senescence. It may play a role in cell cycle regulation via its interaction with and promotion of degradation of TP53. May play a role in the control of cell proliferation and cellular aging. Protects against reactive oxygen species (ROS). Extracellular HSPA9 plays a cytoprotective role by preventing cell lysis following immune attack by the membrane attack complex by disrupting formation of the complex. This is Stress-70 protein, mitochondrial from Rattus norvegicus (Rat).